The primary structure comprises 165 residues: Chorismate pyruvate-lyase (165 aa).

Positions 35, 77, 115, and 156 each coordinate substrate.

The protein belongs to the UbiC family. In terms of assembly, monomer.

It is found in the cytoplasm. It carries out the reaction chorismate = 4-hydroxybenzoate + pyruvate. It functions in the pathway cofactor biosynthesis; ubiquinone biosynthesis. Removes the pyruvyl group from chorismate, with concomitant aromatization of the ring, to provide 4-hydroxybenzoate (4HB) for the ubiquinone pathway. The sequence is that of Chorismate pyruvate-lyase from Shigella sonnei (strain Ss046).